The sequence spans 182 residues: MLVLVLGDLHIPHRCNSLPAKFKKLLVPGKIQHILCTGNLCTKESYDYLKTLAGDVHIVRGDFDENLNYPEQKVVTVGQFKIGLIHGHQVIPWGDMASLALLQRQFDVDILISGHTHKFEAFEHENKFYINPGSATGAYNALEANIIPSFVLMDIQASTVVTYVYQLIGDDVKVERIEYKKS.

The residue at position 50 (Lys-50) is an N6-acetyllysine.

This sequence belongs to the VPS29 family. As to quaternary structure, component of the commander complex consisting of the CCC subcomplex and the retriever subcomplex. Component of the heterotrimeric retriever complex formed by VPS26C, VPS29 and VPS35L; within the complex interacts with VPS35L. Component of the heterotrimeric retromer cargo-selective complex (CSC), also described as vacuolar protein sorting subcomplex (VPS), formed by VPS26 (VPS26A or VPS26B), VPS29 and VPS35. The CSC has a highly elongated structure with VPS26 and VPS29 binding independently at opposite distal ends of VPS35 as central platform. The CSC is believed to associate with variable sorting nexins to form functionally distinct retromer complex variants. The originally described retromer complex (also called SNX-BAR retromer) is a pentamer containing the CSC and a heterodimeric membrane-deforming subcomplex formed between SNX1 or SNX2 and SNX5 or SNX6 (also called SNX-BAR subcomplex); the respective CSC and SNX-BAR subcomplexes associate with low affinity. The CSC associates with SNX3 to form a SNX3-retromer complex. The CSC associates with SNX27, the WASH complex and the SNX-BAR subcomplex to form the SNX27-retromer complex. Interacts with VPS26A, VPS35, SNX1, SNX2, SNX3, SNX27, WASHC5. Interacts with TBC1D5; this interaction is blocked by VPS35L in the retriever complex. Interacts with SNX17; the interaction is indirect; SNX17 (via its C-terminus) interacts with the retriever complex (via VPS26C and VPS35L). Interacts with VPS26B and ANKRD27.

The protein resides in the cytoplasm. It is found in the membrane. It localises to the endosome membrane. The protein localises to the early endosome. Its subcellular location is the late endosome. Functionally, component of the commander complex that is essential for endosomal recycling of transmembrane cargos; the commander complex is composed of the CCC subcomplex and the retriever subcomplex. Component of the retriever complex, which is a heterotrimeric complex related to retromer cargo-selective complex (CSC) and essential for retromer-independent retrieval and recycling of numerous cargos such as integrin alpha-5/beta-1 (ITGA5:ITGB1). Component of the retromer cargo-selective complex (CSC). The CSC is believed to be the core functional component of retromer or respective retromer complex variants acting to prevent missorting of selected transmembrane cargo proteins into the lysosomal degradation pathway. The recruitment of the CSC to the endosomal membrane involves RAB7A and SNX3. The SNX-BAR retromer mediates retrograde transport of cargo proteins from endosomes to the trans-Golgi network (TGN) and is involved in endosome-to-plasma membrane transport for cargo protein recycling. The SNX3-retromer mediates the retrograde endosome-to-TGN transport of WLS distinct from the SNX-BAR retromer pathway. The SNX27-retromer is believed to be involved in endosome-to-plasma membrane trafficking and recycling of a broad spectrum of cargo proteins. The CSC seems to act as recruitment hub for other proteins, such as the WASH complex and TBC1D5. Required to regulate transcytosis of the polymeric immunoglobulin receptor (pIgR-pIgA). In the endosomes, retriever complex drives the retrieval and recycling of NxxY-motif-containing cargo proteins by coupling to SNX17, a cargo essential for the homeostatic maintenance of numerous cell surface proteins associated with processes that include cell migration, cell adhesion, nutrient supply and cell signaling. The recruitment of the retriever complex to the endosomal membrane involves CCC and WASH complexes. Involved in GLUT1 endosome-to-plasma membrane trafficking; the function is dependent of association with ANKRD27. This is Vacuolar protein sorting-associated protein 29 (VPS29) from Pongo abelii (Sumatran orangutan).